The following is a 520-amino-acid chain: 4-hydroxyphenylacetate 3-monooxygenase oxygenase component (520 aa).

FAD contacts are provided by residues 155–157 (HAI) and T196.

The protein belongs to the FADH(2)-utilizing monooxygenase family. In terms of assembly, homodimer. HPA 3-hydroxylase consists of a reductase component HpaC and an oxygenase component HpaB. Some form of interactions between the reductase and the oxygenase facilitate the transfer of FADH(-) to the oxygenase in P.aeruginosa, although interactions are not required in other species.

It catalyses the reaction 4-hydroxyphenylacetate + FADH2 + O2 = 3,4-dihydroxyphenylacetate + FAD + H2O + H(+). The protein operates within aromatic compound metabolism; 4-hydroxyphenylacetate degradation; pyruvate and succinate semialdehyde from 4-hydroxyphenylacetate: step 1/7. Oxygenase component of the 4-hydroxyphenylacetate (HPA) 3-hydroxylase. Catalyzes the hydroxylation of 4-hydroxyphenylacetate to form 3,4-dihydroxyphenylacetate, using FADH(-) provided by the reductase component HpaC to activate oxygen. To a lesser extent, can also use reduced FMN. In vitro, has hydroxylation activity toward tyrosol and various cinnamic acid derivatives, catalyzing the hydroxylation of p-coumaric acid, caffeic acid, ferulic acid, and coniferaldehyde. The chain is 4-hydroxyphenylacetate 3-monooxygenase oxygenase component from Pseudomonas aeruginosa (strain ATCC 15692 / DSM 22644 / CIP 104116 / JCM 14847 / LMG 12228 / 1C / PRS 101 / PAO1).